The sequence spans 345 residues: Phosphate import ATP-binding protein PstB 2 (345 aa).

Residues 1–57 are disordered; that stretch reads MSDTPQSEPRRSDDRSGADDATAAAAGSTDAAAAAVSSKTGGIAGPPGGPGEVDGDE. Residues 8–18 show a composition bias toward basic and acidic residues; it reads EPRRSDDRSGA. Positions 19-35 are enriched in low complexity; that stretch reads DDATAAAAGSTDAAAAA. The span at 42–52 shows a compositional bias: gly residues; it reads GIAGPPGGPGE. The 255-residue stretch at 86–340 folds into the ABC transporter domain; the sequence is VSVSDLDTYY…PQSQRVEDYV (255 aa). 118–125 contacts ATP; the sequence is GPSGCGKS.

The protein belongs to the ABC transporter superfamily. Phosphate importer (TC 3.A.1.7) family. As to quaternary structure, the complex is composed of two ATP-binding proteins (PstB), two transmembrane proteins (PstC and PstA) and a solute-binding protein (PstS).

Its subcellular location is the cell membrane. The enzyme catalyses phosphate(out) + ATP + H2O = ADP + 2 phosphate(in) + H(+). Its function is as follows. Part of the ABC transporter complex PstSACB involved in phosphate import. Responsible for energy coupling to the transport system. This chain is Phosphate import ATP-binding protein PstB 2, found in Halobacterium salinarum (strain ATCC 700922 / JCM 11081 / NRC-1) (Halobacterium halobium).